A 313-amino-acid polypeptide reads, in one-letter code: Ribosomal RNA small subunit methyltransferase H (313 aa).

S-adenosyl-L-methionine-binding positions include 35 to 37 (GGH), D55, F80, D102, and Q109.

It belongs to the methyltransferase superfamily. RsmH family.

It localises to the cytoplasm. The enzyme catalyses cytidine(1402) in 16S rRNA + S-adenosyl-L-methionine = N(4)-methylcytidine(1402) in 16S rRNA + S-adenosyl-L-homocysteine + H(+). In terms of biological role, specifically methylates the N4 position of cytidine in position 1402 (C1402) of 16S rRNA. In Shewanella denitrificans (strain OS217 / ATCC BAA-1090 / DSM 15013), this protein is Ribosomal RNA small subunit methyltransferase H.